Reading from the N-terminus, the 134-residue chain is Protein Turandot E (134 aa).

A signal peptide spans 1-38; it reads MSYTRTVHSSTSILKMNSALQISCLLVVLGCLLGSGHC.

It belongs to the Turandot family.

The protein resides in the secreted. In terms of biological role, a humoral factor that may play a role in stress tolerance. The protein is Protein Turandot E of Drosophila simulans (Fruit fly).